The following is a 170-amino-acid chain: Cytochrome bc1 complex Rieske iron-sulfur subunit (170 aa).

The 91-residue stretch at 63–153 (KAALMIIRLE…IGVNDEGYLE (91 aa)) folds into the Rieske domain. 4 residues coordinate [2Fe-2S] cluster: cysteine 96, histidine 98, cysteine 115, and histidine 118. Cysteine 101 and cysteine 117 are oxidised to a cystine.

The cytochrome bc1 complex is composed of a cytochrome b (QcrB), the Rieske iron-sulfur protein (QcrA) and a diheme cytochrome c (QcrC) subunit. Requires [2Fe-2S] cluster as cofactor.

It is found in the cell membrane. Functionally, iron-sulfur subunit of the cytochrome bc1 complex, an essential component of the respiratory electron transport chain required for ATP synthesis. The bc1 complex catalyzes the oxidation of menaquinol and the reduction of cytochrome c in the respiratory chain. The bc1 complex operates through a Q-cycle mechanism that couples electron transfer to generation of the proton gradient that drives ATP synthesis. In Streptomyces lividans, this protein is Cytochrome bc1 complex Rieske iron-sulfur subunit (qcrA).